The primary structure comprises 69 residues: Cytochrome c oxidase subunit 8A, mitochondrial (69 aa).

Residues 1-25 (MSVLTPLLLRGLTGSARRLPVLRAQ) constitute a mitochondrion transit peptide. The short motif at 2-19 (SVLTPLLLRGLTGSARRL) is the SIFI-degron element. Over 26–36 (VHSKPPREKLG) the chain is Mitochondrial matrix. Residues 37 to 60 (TMDVAIGLTSCFVCFLLPSGWVLS) traverse the membrane as a helical segment. Topologically, residues 61 to 69 (HLETYKKRE) are mitochondrial intermembrane.

It belongs to the cytochrome c oxidase VIII family. Component of the cytochrome c oxidase (complex IV, CIV), a multisubunit enzyme composed of 14 subunits. The complex is composed of a catalytic core of 3 subunits MT-CO1, MT-CO2 and MT-CO3, encoded in the mitochondrial DNA, and 11 supernumerary subunits COX4I, COX5A, COX5B, COX6A, COX6B, COX6C, COX7A, COX7B, COX7C, COX8 and NDUFA4, which are encoded in the nuclear genome. The complex exists as a monomer or a dimer and forms supercomplexes (SCs) in the inner mitochondrial membrane with NADH-ubiquinone oxidoreductase (complex I, CI) and ubiquinol-cytochrome c oxidoreductase (cytochrome b-c1 complex, complex III, CIII), resulting in different assemblies (supercomplex SCI(1)III(2)IV(1) and megacomplex MCI(2)III(2)IV(2)). Post-translationally, in response to mitochondrial stress, the precursor protein is ubiquitinated by the SIFI complex in the cytoplasm before mitochondrial import, leading to its degradation. Within the SIFI complex, UBR4 initiates ubiquitin chain that are further elongated or branched by KCMF1.

It is found in the mitochondrion inner membrane. The protein operates within energy metabolism; oxidative phosphorylation. Its function is as follows. Component of the cytochrome c oxidase, the last enzyme in the mitochondrial electron transport chain which drives oxidative phosphorylation. The respiratory chain contains 3 multisubunit complexes succinate dehydrogenase (complex II, CII), ubiquinol-cytochrome c oxidoreductase (cytochrome b-c1 complex, complex III, CIII) and cytochrome c oxidase (complex IV, CIV), that cooperate to transfer electrons derived from NADH and succinate to molecular oxygen, creating an electrochemical gradient over the inner membrane that drives transmembrane transport and the ATP synthase. Cytochrome c oxidase is the component of the respiratory chain that catalyzes the reduction of oxygen to water. Electrons originating from reduced cytochrome c in the intermembrane space (IMS) are transferred via the dinuclear copper A center (CU(A)) of subunit 2 and heme A of subunit 1 to the active site in subunit 1, a binuclear center (BNC) formed by heme A3 and copper B (CU(B)). The BNC reduces molecular oxygen to 2 water molecules using 4 electrons from cytochrome c in the IMS and 4 protons from the mitochondrial matrix. In Eulemur fulvus fulvus (Brown lemur), this protein is Cytochrome c oxidase subunit 8A, mitochondrial (COX8A).